The sequence spans 277 residues: Putative phosphoenolpyruvate synthase regulatory protein (277 aa).

152 to 159 (GVSRCGKT) serves as a coordination point for ADP.

Belongs to the pyruvate, phosphate/water dikinase regulatory protein family. PSRP subfamily.

The enzyme catalyses [pyruvate, water dikinase] + ADP = [pyruvate, water dikinase]-phosphate + AMP + H(+). It carries out the reaction [pyruvate, water dikinase]-phosphate + phosphate + H(+) = [pyruvate, water dikinase] + diphosphate. In terms of biological role, bifunctional serine/threonine kinase and phosphorylase involved in the regulation of the phosphoenolpyruvate synthase (PEPS) by catalyzing its phosphorylation/dephosphorylation. This is Putative phosphoenolpyruvate synthase regulatory protein from Chromohalobacter salexigens (strain ATCC BAA-138 / DSM 3043 / CIP 106854 / NCIMB 13768 / 1H11).